A 188-amino-acid polypeptide reads, in one-letter code: Capsid protein (188 aa).

The segment covering 150 to 181 has biased composition (basic residues); it reads RRRGGARASRSPRRRTPSPRRRRSQSPRRRRS. The segment at 150–188 is disordered; the sequence is RRRGGARASRSPRRRTPSPRRRRSQSPRRRRSQSPSANC. Residues serine 160, serine 167, and serine 175 each carry the phosphoserine; by host modification. A 1; half-length repeat occupies 160-166; it reads SPRRRTP. The 3 X 8 AA repeats of S-P-R-R-R-[PR]-S-Q stretch occupies residues 160-182; the sequence is SPRRRTPSPRRRRSQSPRRRRSQ. Residues 163–180 carry the Bipartite nuclear localization signal motif; sequence RRTPSPRRRRSQSPRRRR. 2 consecutive repeat copies span residues 167–174 and 175–182. The interval 182–188 is RNA binding; the sequence is QSPSANC.

It belongs to the orthohepadnavirus core antigen family. As to quaternary structure, homodimerizes, then multimerizes. Interacts with cytosol exposed regions of viral L glycoprotein present in the reticulum-to-Golgi compartment. Interacts with human FLNB. Phosphorylated form interacts with host importin alpha; this interaction depends on the exposure of the NLS, which itself depends upon genome maturation and/or phosphorylation of the capsid protein. Interacts with host NUP153. Post-translationally, phosphorylated by host SRPK1, SRPK2, and maybe protein kinase C or GAPDH. Phosphorylation is critical for pregenomic RNA packaging. Protein kinase C phosphorylation is stimulated by HBx protein and may play a role in transport of the viral genome to the nucleus at the late step during the viral replication cycle.

The protein resides in the virion. The protein localises to the host cytoplasm. In terms of biological role, self assembles to form an icosahedral capsid. Most capsids appear to be large particles with an icosahedral symmetry of T=4 and consist of 240 copies of capsid protein, though a fraction forms smaller T=3 particles consisting of 180 capsid proteins. Entering capsids are transported along microtubules to the nucleus. Phosphorylation of the capsid is thought to induce exposure of nuclear localization signal in the C-terminal portion of the capsid protein that allows binding to the nuclear pore complex via the importin (karyopherin-) alpha and beta. Capsids are imported in intact form through the nuclear pore into the nuclear basket, where it probably binds NUP153. Only capsids that contain the mature viral genome can release the viral DNA and capsid protein into the nucleoplasm. Immature capsids get stuck in the basket. Capsids encapsulate the pre-genomic RNA and the P protein. Pre-genomic RNA is reverse-transcribed into DNA while the capsid is still in the cytoplasm. The capsid can then either be directed to the nucleus, providing more genomes for transcription, or bud through the endoplasmic reticulum to provide new virions. The protein is Capsid protein of Marmota monax (Woodchuck).